The primary structure comprises 385 residues: Photoreceptor ankyrin repeat protein (385 aa).

ANK repeat units lie at residues cysteine 17–glutamate 46, asparagine 53–glutamine 83, aspartate 87–leucine 116, arginine 122–serine 151, and arginine 156–leucine 190. The tract at residues leucine 270 to lysine 385 is disordered. Residues alanine 284–valine 297 show a composition bias toward pro residues. Residues alanine 304–glutamine 326 are compositionally biased toward polar residues. The segment covering phenylalanine 361–proline 373 has biased composition (basic and acidic residues). A compositionally biased stretch (gly residues) spans arginine 374–lysine 385.

In terms of tissue distribution, isoform 1: Expressed predominantly in the retina. Isoform 2: Expressed in the pineal gland.

Its subcellular location is the cytoplasm. The protein localises to the cytosol. It is found in the nucleus. Its function is as follows. Acts as a transcriptional repressor for CRX-activated photoreceptor gene regulation. This chain is Photoreceptor ankyrin repeat protein, found in Mus musculus (Mouse).